Consider the following 299-residue polypeptide: ATP phosphoribosyltransferase (299 aa).

The protein belongs to the ATP phosphoribosyltransferase family. Long subfamily. As to quaternary structure, equilibrium between an active dimeric form, an inactive hexameric form and higher aggregates. Interconversion between the various forms is largely reversible and is influenced by the natural substrates and inhibitors of the enzyme. The cofactor is Mg(2+).

It localises to the cytoplasm. The catalysed reaction is 1-(5-phospho-beta-D-ribosyl)-ATP + diphosphate = 5-phospho-alpha-D-ribose 1-diphosphate + ATP. It participates in amino-acid biosynthesis; L-histidine biosynthesis; L-histidine from 5-phospho-alpha-D-ribose 1-diphosphate: step 1/9. Feedback inhibited by histidine. Catalyzes the condensation of ATP and 5-phosphoribose 1-diphosphate to form N'-(5'-phosphoribosyl)-ATP (PR-ATP). Has a crucial role in the pathway because the rate of histidine biosynthesis seems to be controlled primarily by regulation of HisG enzymatic activity. In Erwinia tasmaniensis (strain DSM 17950 / CFBP 7177 / CIP 109463 / NCPPB 4357 / Et1/99), this protein is ATP phosphoribosyltransferase.